A 139-amino-acid chain; its full sequence is MLIPKRTKYRKQHRPVRSGMSKGGNEINFGDFGIQSLAPAYVTNRQIEAARIAMTRYIKRGGRVWITIFPDRPLTKHPLGARMGSGKGAPEFWIANVRPGRVMFEIGGVSEDVAKEALRRAIDKLPMKCRIIAREGGDI.

Residues 1–16 (MLIPKRTKYRKQHRPV) are compositionally biased toward basic residues. Residues 1–22 (MLIPKRTKYRKQHRPVRSGMSK) form a disordered region.

This sequence belongs to the universal ribosomal protein uL16 family. Part of the 50S ribosomal subunit.

In terms of biological role, binds 23S rRNA and is also seen to make contacts with the A and possibly P site tRNAs. The protein is Large ribosomal subunit protein uL16 of Bifidobacterium longum subsp. infantis (strain ATCC 15697 / DSM 20088 / JCM 1222 / NCTC 11817 / S12).